A 462-amino-acid chain; its full sequence is Protoheme IX farnesyltransferase, mitochondrial (462 aa).

7 helical membrane passes run 152-172 (LTIL…YTVS), 173-193 (LPEL…ANAI), 237-257 (MLFL…IVLY), 269-289 (IINT…GWAA), 296-316 (PGAW…FNAL), 348-368 (SLLM…DWVF), and 411-431 (AKKL…LAML).

This sequence belongs to the UbiA prenyltransferase family.

The protein resides in the mitochondrion membrane. Converts protoheme IX and farnesyl diphosphate to heme O. This Debaryomyces hansenii (strain ATCC 36239 / CBS 767 / BCRC 21394 / JCM 1990 / NBRC 0083 / IGC 2968) (Yeast) protein is Protoheme IX farnesyltransferase, mitochondrial (COX10).